Consider the following 84-residue polypeptide: Exodeoxyribonuclease 7 small subunit (84 aa).

Belongs to the XseB family. Heterooligomer composed of large and small subunits.

Its subcellular location is the cytoplasm. The enzyme catalyses Exonucleolytic cleavage in either 5'- to 3'- or 3'- to 5'-direction to yield nucleoside 5'-phosphates.. Bidirectionally degrades single-stranded DNA into large acid-insoluble oligonucleotides, which are then degraded further into small acid-soluble oligonucleotides. The sequence is that of Exodeoxyribonuclease 7 small subunit from Bartonella quintana (strain Toulouse) (Rochalimaea quintana).